Reading from the N-terminus, the 198-residue chain is Cell division protein SepF (198 aa).

The tract at residues 170–198 (EVPQPPARPARPASTNPPAWGNETNRMAQ) is disordered. A compositionally biased stretch (low complexity) spans 179–188 (ARPASTNPPA).

Belongs to the SepF family. Homodimer. Interacts with FtsZ.

It is found in the cytoplasm. Functionally, cell division protein that is part of the divisome complex and is recruited early to the Z-ring. Probably stimulates Z-ring formation, perhaps through the cross-linking of FtsZ protofilaments. Its function overlaps with FtsA. This chain is Cell division protein SepF, found in Trichormus variabilis (strain ATCC 29413 / PCC 7937) (Anabaena variabilis).